The primary structure comprises 859 residues: DNA mismatch repair protein MutS (859 aa).

Residue 622–629 (GPNMGGKS) coordinates ATP.

The protein belongs to the DNA mismatch repair MutS family.

In terms of biological role, this protein is involved in the repair of mismatches in DNA. It is possible that it carries out the mismatch recognition step. This protein has a weak ATPase activity. The chain is DNA mismatch repair protein MutS from Coxiella burnetii (strain RSA 493 / Nine Mile phase I).